A 339-amino-acid chain; its full sequence is UDP-N-acetylenolpyruvoylglucosamine reductase (339 aa).

Residues glycine 18–arginine 189 form the FAD-binding PCMH-type domain. Arginine 166 is a catalytic residue. Catalysis depends on serine 239, which acts as the Proton donor. Glutamate 335 is a catalytic residue.

This sequence belongs to the MurB family. Requires FAD as cofactor.

The protein resides in the cytoplasm. The catalysed reaction is UDP-N-acetyl-alpha-D-muramate + NADP(+) = UDP-N-acetyl-3-O-(1-carboxyvinyl)-alpha-D-glucosamine + NADPH + H(+). The protein operates within cell wall biogenesis; peptidoglycan biosynthesis. Its function is as follows. Cell wall formation. This is UDP-N-acetylenolpyruvoylglucosamine reductase from Pseudomonas aeruginosa (strain ATCC 15692 / DSM 22644 / CIP 104116 / JCM 14847 / LMG 12228 / 1C / PRS 101 / PAO1).